The following is a 335-amino-acid chain: Cut9-interacting protein scn1 (335 aa).

This sequence belongs to the metallo-dependent hydrolases superfamily.

Its function is as follows. Interacts with cut9. This is Cut9-interacting protein scn1 (scn1) from Schizosaccharomyces pombe (strain 972 / ATCC 24843) (Fission yeast).